The sequence spans 103 residues: MSTTPETADFTEWQQVVDLLRQAALEQKDDVMLKLLLTPDEREALLARVNILHELMNGQRSQRKISELLGVGVATITRGSNELKHQSDDTKEWLASLLKKQQQ.

A DNA-binding region spans residues 62-85 (QRKISELLGVGVATITRGSNELKH).

Belongs to the TrpR family. Homodimer.

The protein localises to the cytoplasm. In terms of biological role, this protein is an aporepressor. When complexed with L-tryptophan it binds the operator region of the trp operon and prevents the initiation of transcription. This Photobacterium profundum (strain SS9) protein is Trp operon repressor homolog.